A 169-amino-acid polypeptide reads, in one-letter code: MAEMAELCELYEESNELQMDVLPGEGYMEVGRGARGPAPEEGPMEEEAGPAAARAQRGLFPEAGADLEGDEFDDWEDDYEFPEEERWSGAMHRVSAALEEANKVFLRTARAGDALDGGFQARCEKSPFDQLAFIEELFSLMVVNRLTEELGCDEIIDRELMLTREEETT.

The tract at residues 31-50 (GRGARGPAPEEGPMEEEAGP) is disordered. The tract at residues 54–120 (RAQRGLFPEA…AGDALDGGFQ (67 aa)) is interaction with NR0B2. Residues 150–154 (LGCDE) carry the LXCXE motif motif.

As to quaternary structure, interacts via its LXCXE motif with the entire pocket region of RB1. Interacts with EP300, NR0B2 and TRIM27. In terms of tissue distribution, expressed in all adult tissues examined and during embryogenesis.

The protein resides in the nucleus. It localises to the cytoplasm. In terms of biological role, interacts with RB1 and EP300 and acts as a repressor of MYOD1 transactivation. Inhibits EP300 and CBP histone acetyltransferase activity. May be involved in coupling cell cycle exit to the transcriptional activation of genes required for cellular differentiation. May act as a candidate coinhibitory factor for NR0B2 that can be directly linked to transcription inhibitory mechanisms. The chain is EP300-interacting inhibitor of differentiation 1 from Mus musculus (Mouse).